The primary structure comprises 180 residues: Inner membrane assembly complex subunit 17 (180 aa).

A mitochondrion-targeting transit peptide spans 1–36 (MMIRNQLYRKCIIGGGRSILNGWVINGTVPNIGLRY). The Mitochondrial matrix segment spans residues 37–105 (LRSGIVTRSN…RKTQDIPIKR (69 aa)). The helical transmembrane segment at 106–128 (FIRPTWMFLLMSSTFYLLGHYIW) threads the bilayer. The stretch at 129 to 163 (WKLEYDEVEKELDRQVTALEEELHNLIEEHRVHGE) forms a coiled coil. At 129-180 (WKLEYDEVEKELDRQVTALEEELHNLIEEHRVHGENEAIKNKKHKHWYKFWS) the chain is on the mitochondrial intermembrane side.

The protein belongs to the INA17 family. In terms of assembly, component of the inner membrane assembly (INA) complex, composed of INA17 and INA22. Interacts with a subset of F(1)F(0)-ATP synthase subunits of the F(1)-domain and the peripheral stalk.

It is found in the mitochondrion inner membrane. Component of the INA complex (INAC) that promotes the biogenesis of mitochondrial F(1)F(0)-ATP synthase. INAC facilitates the assembly of the peripheral stalk and promotes the assembly of the catalytic F(1)-domain with the membrane-embedded F(0)-domain. This is Inner membrane assembly complex subunit 17 from Vanderwaltozyma polyspora (strain ATCC 22028 / DSM 70294 / BCRC 21397 / CBS 2163 / NBRC 10782 / NRRL Y-8283 / UCD 57-17) (Kluyveromyces polysporus).